Reading from the N-terminus, the 254-residue chain is 5-oxoprolinase subunit A (254 aa).

Belongs to the LamB/PxpA family. In terms of assembly, forms a complex composed of PxpA, PxpB and PxpC.

The enzyme catalyses 5-oxo-L-proline + ATP + 2 H2O = L-glutamate + ADP + phosphate + H(+). Catalyzes the cleavage of 5-oxoproline to form L-glutamate coupled to the hydrolysis of ATP to ADP and inorganic phosphate. This chain is 5-oxoprolinase subunit A, found in Burkholderia ambifaria (strain MC40-6).